The sequence spans 139 residues: Natriuretic peptide Mf-NP (139 aa).

The N-terminal stretch at 1–25 (MVGLSRLTGGGLLLVLALLPLALDG) is a signal peptide. A propeptide spanning residues 26–75 (KPLEEAPTAPSRIIPFSRPVRKESQAVLDPMVHPERPAGSGDDGDLSRLE) is cleaved from the precursor. Cys-86 and Cys-102 form a disulfide bridge. Positions 117–139 (IIPFSRPVRKESRAALDRMQHPG) are excised as a propeptide.

It belongs to the natriuretic peptide family. Expressed by the venom gland.

The protein resides in the secreted. In terms of biological role, natriuretic peptide that dose-dependently induces the rapid relaxation of rat aortic strips phenylephrine-precontracted. Acts by stimulating cGMP production in a dose-dependent manner (by probably activating NPR1 and/or NPR2). May also show potent hypotensive effects. The sequence is that of Natriuretic peptide Mf-NP from Micrurus fulvius (Eastern coral snake).